Here is a 917-residue protein sequence, read N- to C-terminus: Hexokinase-1 (917 aa).

Met1 is subject to N-acetylmethionine. Residues 1-10 (MIAAQLLAYY) form a mitochondrial-binding peptide (MBP) region. 2 Hexokinase domains span residues 16-458 (DDQV…MVTA) and 464-906 (AEQH…LITA). ATP-binding positions include Arg30 and 84 to 89 (DLGGSS). Residues 73–207 (DGSEKGDFIA…DYDANIVAVV (135 aa)) are hexokinase small subdomain 1. 84–91 (DLGGSSFR) contributes to the D-glucose 6-phosphate binding site. D-glucose is bound by residues Ser155, 172-173 (TK), and 208-209 (ND). Residues 208–447 (NDTVGTMMTC…SDVRFLLSES (240 aa)) are hexokinase large subdomain 1. 2 residues coordinate D-glucose 6-phosphate: Asp209 and Thr232. D-glucose is bound by residues Asn235, Glu260, and 291 to 294 (QLFE). Phosphoserine is present on Ser337. Residue Asn345 coordinates ATP. Position 413 to 415 (413 to 415 (DGS)) interacts with D-glucose 6-phosphate. Residue 425–426 (RR) coordinates ATP. D-glucose 6-phosphate contacts are provided by residues Ser449 and 532–536 (DLGGT). Positions 521-655 (DGTENGDFLA…EFDLDVVAVV (135 aa)) are hexokinase small subdomain 2. 532–537 (DLGGTN) is a binding site for ATP. D-glucose-binding positions include 603 to 604 (SF), 620 to 621 (TK), and 656 to 657 (ND). Positions 656 to 895 (NDTVGTMMTC…CNVSFLLSED (240 aa)) are hexokinase large subdomain 2. D-glucose 6-phosphate is bound by residues Asp657 and Thr680. Thr680 contacts ATP. Residues 682–683 (SN), Glu708, and Glu742 contribute to the D-glucose site. Residues 747–748 (GM), 784–788 (TKFLS), and 863–867 (TLYKL) contribute to the ATP site. D-glucose 6-phosphate is bound by residues 861 to 863 (DGT) and Ser897.

This sequence belongs to the hexokinase family. As to quaternary structure, monomer. Interacts with RABL2/RABL2A; binds preferentially to GTP-bound RABL2. Interacts with VDAC1. The HK1-VDAC1 complex interacts with ATF2. Interacts (via N-terminal spermatogenic cell-specific region) with PFKM (via C-terminus). Interacts with SMAD5.

Its subcellular location is the mitochondrion outer membrane. The protein localises to the cytoplasm. It is found in the cytosol. The enzyme catalyses a D-hexose + ATP = a D-hexose 6-phosphate + ADP + H(+). The catalysed reaction is D-fructose + ATP = D-fructose 6-phosphate + ADP + H(+). It carries out the reaction D-glucose + ATP = D-glucose 6-phosphate + ADP + H(+). It catalyses the reaction D-mannose + ATP = D-mannose 6-phosphate + ADP + H(+). The enzyme catalyses D-glucosamine + ATP = D-glucosamine 6-phosphate + ADP + H(+). It functions in the pathway carbohydrate metabolism; hexose metabolism. The protein operates within carbohydrate degradation; glycolysis; D-glyceraldehyde 3-phosphate and glycerone phosphate from D-glucose: step 1/4. Hexokinase is an allosteric enzyme inhibited by its product D-glucose 6-phosphate. Hexokinase activity is inhibited by N-acetyl-D-glucosamine. Its function is as follows. Catalyzes the phosphorylation of various hexoses, such as D-glucose, D-glucosamine, D-fructose, D-mannose and 2-deoxy-D-glucose, to hexose 6-phosphate (D-glucose 6-phosphate, D-glucosamine 6-phosphate, D-fructose 6-phosphate, D-mannose 6-phosphate and 2-deoxy-D-glucose 6-phosphate, respectively). Does not phosphorylate N-acetyl-D-glucosamine. Mediates the initial step of glycolysis by catalyzing phosphorylation of D-glucose to D-glucose 6-phosphate. Involved in innate immunity and inflammation by acting as a pattern recognition receptor for bacterial peptidoglycan. When released in the cytosol, N-acetyl-D-glucosamine component of bacterial peptidoglycan inhibits the hexokinase activity of HK1 and causes its dissociation from mitochondrial outer membrane, thereby activating the NLRP3 inflammasome. The sequence is that of Hexokinase-1 from Pongo abelii (Sumatran orangutan).